Consider the following 187-residue polypeptide: PBAN-type neuropeptides (187 aa).

An N-terminal signal peptide occupies residues 1 to 22 (MSRFYFFFNLICLYLAIKSALS). A propeptide spanning residues 23–64 (AELDTNDQKYADLRTTGRGESPDSTGPDSDTLRRDDGAEGLN) is cleaved from the precursor. Over residues 34 to 43 (DLRTTGRGES) the composition is skewed to basic and acidic residues. The interval 34-58 (DLRTTGRGESPDSTGPDSDTLRRDD) is disordered. Leu-76 carries the leucine amide modification. Residues 80–127 (TIAADLHDDLVEEFDAEPLGYAGEPPQKLATELVQGAPYMVLLVTAKP) constitute a propeptide that is removed on maturation. The tract at residues 132–163 (PIFYHTTSPRLGRRDSVGENHQRPPFAPRLGR) is disordered. At Leu-142 the chain carries Leucine amide. Residues 143 to 153 (GRRDSVGENHQ) show a composition bias toward basic and acidic residues. Leucine amide is present on residues Leu-161 and Leu-171. Positions 174–187 (SYNGGYPLPFQFAY) are excised as a propeptide.

Belongs to the pyrokinin family.

Its subcellular location is the secreted. A hormone that controls sex pheromone production in females and pheromone responsiveness in male. Also mediates visceral muscle contractile activity (myotropic activity). The sequence is that of PBAN-type neuropeptides from Anopheles gambiae (African malaria mosquito).